Consider the following 387-residue polypeptide: MAVSVTPIRDTKWLTLEVCREFQRGTCSRPDTECKFAHPSKSCQVENGRVIACFDSLKGRCSRENCKYLHPPPHLKTQLEINGRNNLIQQKNMAMLAQQMQLANAMMPGAPLQPVPMFSVAPSLATNASAAFNPYLGPVSPSLVPAEILPTAPMLVTGNPGVPVPAAAAAAAQKLMRTDRLEVCREYQRGNCNRGENDCRFAHPADSTMIDTNDNTVTVCMDYIKGRCSREKCKYFHPPAHLQAKIKAAQYQVNQAAAAQAAATAAAMTQSAVKSLKRPLEATFDLGIPQAVLPPLPKRPALEKTNGATAVFNTGIFQYQQALANMQLQQHTAFLPPVPMVHGATPATVSAATTSATSVPFAATATANQIPIISAEHLTSHKYVTQM.

Threonine 6 is subject to Phosphothreonine. C3H1-type zinc fingers lie at residues 13–41 (WLTLEVCREFQRGTCSRPDTECKFAHPSK), 47–73 (NGRVIACFDSLKGRCSRENCKYLHPPP), 178–206 (TDRLEVCREYQRGNCNRGENDCRFAHPAD), and 214–240 (DNTVTVCMDYIKGRCSREKCKYFHPPA).

It belongs to the muscleblind family. Interacts with DDX1 and YBX1. Interacts with HNRNPH1; the interaction in RNA-independent. Interacts with RBPMS; the interaction allows cooperative assembly of RNA-bound stable cell-specific alternative splicing regulatory complexes.

The protein resides in the nucleus. Its subcellular location is the cytoplasm. It is found in the cytoplasmic granule. Its function is as follows. Mediates pre-mRNA alternative splicing regulation. Acts either as activator or repressor of splicing on specific pre-mRNA targets. Inhibits cardiac troponin-T (TNNT2) pre-mRNA exon inclusion but induces insulin receptor (IR) pre-mRNA exon inclusion in muscle. Antagonizes the alternative splicing activity pattern of CELF proteins. Regulates the TNNT2 exon 5 skipping through competition with U2AF2. Inhibits the formation of the spliceosome A complex on intron 4 of TNNT2 pre-mRNA. Binds to the stem-loop structure within the polypyrimidine tract of TNNT2 intron 4 during spliceosome assembly. Binds to the 5'-YGCU(U/G)Y-3'consensus sequence. Binds to the IR RNA. Binds to expanded CUG repeat RNA, which folds into a hairpin structure containing GC base pairs and bulged, unpaired U residues. Together with RNA binding proteins RBPMS and RBFOX2, activates vascular smooth muscle cells alternative splicing events. Regulates NCOR2 alternative splicing. This Rattus norvegicus (Rat) protein is Muscleblind-like protein 1.